The chain runs to 188 residues: GMP synthase [glutamine-hydrolyzing] subunit A (188 aa).

The region spanning M1–L188 is the Glutamine amidotransferase type-1 domain. The Nucleophile role is filled by C78. Catalysis depends on residues H165 and E167.

As to quaternary structure, heterodimer composed of a glutamine amidotransferase subunit (A) and a GMP-binding subunit (B).

It carries out the reaction XMP + L-glutamine + ATP + H2O = GMP + L-glutamate + AMP + diphosphate + 2 H(+). It functions in the pathway purine metabolism; GMP biosynthesis; GMP from XMP (L-Gln route): step 1/1. In terms of biological role, catalyzes the synthesis of GMP from XMP. The sequence is that of GMP synthase [glutamine-hydrolyzing] subunit A from Pyrococcus abyssi (strain GE5 / Orsay).